We begin with the raw amino-acid sequence, 459 residues long: Cysteine--tRNA ligase (459 aa).

Residue Cys-31 coordinates Zn(2+). The short motif at 33-43 (PTVYYNPHIGN) is the 'HIGH' region element. Zn(2+) is bound by residues Cys-216, His-241, and Glu-245. The 'KMSKS' region motif lies at 274–278 (KMSKS). Position 277 (Lys-277) interacts with ATP.

This sequence belongs to the class-I aminoacyl-tRNA synthetase family. Monomer. The cofactor is Zn(2+).

The protein localises to the cytoplasm. The catalysed reaction is tRNA(Cys) + L-cysteine + ATP = L-cysteinyl-tRNA(Cys) + AMP + diphosphate. The polypeptide is Cysteine--tRNA ligase (Rickettsia rickettsii (strain Iowa)).